The chain runs to 322 residues: Mas-related G-protein coupled receptor member X3 (322 aa).

Residues 1–31 (MDPTIPALGTSQTPINRREETPCYKQTLSLT) lie on the Extracellular side of the membrane. A helical membrane pass occupies residues 32–52 (VLTCIISLVGLTGNAVVLWLL). Topologically, residues 53–60 (GFRMRRNA) are cytoplasmic. Residues 61–81 (VSTYILNLAAVDFLFLSGHIV) traverse the membrane as a helical segment. The Extracellular segment spans residues 82-96 (RSPLRLISIRHPISK). Residues 97–117 (IVNPVMTFPYFIGLSMLSAIS) traverse the membrane as a helical segment. Residues 118-139 (TERCLSVLWPMWYRCRRPRHLS) are Cytoplasmic-facing. The chain crosses the membrane as a helical span at residues 140 to 160 (VVVCVLLWALSLLRSILEWMF). The Extracellular portion of the chain corresponds to 161-177 (CDFLFSGADSVWCETSD). The chain crosses the membrane as a helical span at residues 178-198 (FITIAWLIFLCVVLCGSSLVL). The Cytoplasmic segment spans residues 199-213 (LVRILCGSRKMPLTR). Residues 214–234 (LYVTILLTVLVFLLCGLPFGI) traverse the membrane as a helical segment. Topologically, residues 235–254 (QWALFSRIHLDWKVLFCHVH) are extracellular. A helical membrane pass occupies residues 255–275 (LISVFLSSLNSSANPIIYFFV). The Cytoplasmic portion of the chain corresponds to 276-322 (GSFRQRQNRQNLKLVLQRALQDTPEVDEGGGRLPEETLELSVSRLEQ).

The protein belongs to the G-protein coupled receptor 1 family. Mas subfamily.

Its subcellular location is the cell membrane. Orphan receptor. Probably involved in the function of nociceptive neurons. May regulate nociceptor function and/or development, including the sensation or modulation of pain. Potently activated by enkephalins. This is Mas-related G-protein coupled receptor member X3 (MRGPRX3) from Macaca mulatta (Rhesus macaque).